We begin with the raw amino-acid sequence, 209 residues long: Large ribosomal subunit protein uL3 (209 aa).

Gln-150 is modified (N5-methylglutamine).

The protein belongs to the universal ribosomal protein uL3 family. In terms of assembly, part of the 50S ribosomal subunit. Forms a cluster with proteins L14 and L19. In terms of processing, methylated by PrmB.

One of the primary rRNA binding proteins, it binds directly near the 3'-end of the 23S rRNA, where it nucleates assembly of the 50S subunit. This Vibrio vulnificus (strain CMCP6) protein is Large ribosomal subunit protein uL3.